We begin with the raw amino-acid sequence, 790 residues long: Pentatricopeptide repeat-containing protein OTP51, chloroplastic (790 aa).

The N-terminal 56 residues, 1 to 56 (MATTSPCAAPSPSLRCPLALSHPFASPPPPPALRLAGPKLLPGRLAVSPPPGIPAV), are a transit peptide targeting the chloroplast. PPR repeat units follow at residues 182 to 216 (NFALATRVADCLGRDGKVEKCREVFEAMVKQGRVP), 217 to 254 (AESTFHILIVAYLSVPKGRCLEEACTIYNQMIQMGGYK), 256 to 296 (RLSL…NLDV), 299 to 333 (DVYAGLIWLHSYQDVIDRERIIALRKEMKQAGFDE), 334 to 368 (GIDVLVSVMRAFSKEGNVAETEATWHNILQSGSDL), 369 to 403 (PVQAYVCRMEAYARTGEPMKSLDMFKEMKDKNIPP), 404 to 438 (NVASYHKIIEIMTKALEVDIVEQLMNEFIESDMKH), 439 to 469 (LMPAFLDLMYMYMDLDMHEKLELTFLKCIAR), 473 to 507 (NRILYTIYLESLVKVGNIEKAEEVFGEMHNNGMIG), and 509 to 543 (NTKSCNIMLRGYLSAEDYQKAEKVYDMMSKKKYDV). The tract at residues 762–790 (GSSIGSDGTQDTDTDSDDDMQMSDTERDE) is disordered. Over residues 771–790 (QDTDTDSDDDMQMSDTERDE) the composition is skewed to acidic residues.

This sequence belongs to the PPR family. P subfamily.

The protein resides in the plastid. Its subcellular location is the chloroplast. In terms of biological role, promotes the splicing of group II introns in chloroplasts. Required for the splicing of intron 2 of plastid ycf3 transcripts, a factor required for the assembly of photosystem I (PSI). Involved in the splicing of atpF, ndhA, petB and rps16 chloroplastic transcripts. Required for the assembly of PSI. The protein is Pentatricopeptide repeat-containing protein OTP51, chloroplastic of Oryza sativa subsp. japonica (Rice).